A 132-amino-acid polypeptide reads, in one-letter code: MAEEGSPAGGVMDVNTALPEVLKTALIHDGLAPGIREAAKALDKRQAHLCVLAANCDEPMYVKLVEALCAEHQINLIKVDDNKKLGEWVGLCKIDREGKPRKVVGCSCVVVKDYGKESQAKDVIEEYFKSKK.

This sequence belongs to the eukaryotic ribosomal protein eS12 family.

This is Small ribosomal subunit protein eS12 (rps12) from Oreochromis niloticus (Nile tilapia).